The chain runs to 194 residues: Endoribonuclease YbeY (194 aa).

3 residues coordinate Zn(2+): His-151, His-155, and His-161.

Belongs to the endoribonuclease YbeY family. Zn(2+) serves as cofactor.

It is found in the cytoplasm. Its function is as follows. Single strand-specific metallo-endoribonuclease involved in late-stage 70S ribosome quality control and in maturation of the 3' terminus of the 16S rRNA. This Gloeobacter violaceus (strain ATCC 29082 / PCC 7421) protein is Endoribonuclease YbeY.